Here is a 120-residue protein sequence, read N- to C-terminus: Aspartate 1-decarboxylase (120 aa).

Ser-25 acts as the Schiff-base intermediate with substrate; via pyruvic acid in catalysis. Pyruvic acid (Ser) is present on Ser-25. Thr-57 serves as a coordination point for substrate. Tyr-58 functions as the Proton donor in the catalytic mechanism. 73–75 (GAA) contributes to the substrate binding site.

The protein belongs to the PanD family. As to quaternary structure, heterooctamer of four alpha and four beta subunits. Requires pyruvate as cofactor. Post-translationally, is synthesized initially as an inactive proenzyme, which is activated by self-cleavage at a specific serine bond to produce a beta-subunit with a hydroxyl group at its C-terminus and an alpha-subunit with a pyruvoyl group at its N-terminus.

The protein localises to the cytoplasm. The enzyme catalyses L-aspartate + H(+) = beta-alanine + CO2. The protein operates within cofactor biosynthesis; (R)-pantothenate biosynthesis; beta-alanine from L-aspartate: step 1/1. Catalyzes the pyruvoyl-dependent decarboxylation of aspartate to produce beta-alanine. This chain is Aspartate 1-decarboxylase, found in Methylibium petroleiphilum (strain ATCC BAA-1232 / LMG 22953 / PM1).